Here is a 139-residue protein sequence, read N- to C-terminus: Phosphoribosyl-AMP cyclohydrolase (139 aa).

Asp-91 contacts Mg(2+). Cys-92 contacts Zn(2+). 2 residues coordinate Mg(2+): Asp-93 and Asp-95. Zn(2+)-binding residues include Cys-110 and Cys-117.

This sequence belongs to the PRA-CH family. As to quaternary structure, homodimer. It depends on Mg(2+) as a cofactor. Zn(2+) serves as cofactor.

It localises to the cytoplasm. It carries out the reaction 1-(5-phospho-beta-D-ribosyl)-5'-AMP + H2O = 1-(5-phospho-beta-D-ribosyl)-5-[(5-phospho-beta-D-ribosylamino)methylideneamino]imidazole-4-carboxamide. It participates in amino-acid biosynthesis; L-histidine biosynthesis; L-histidine from 5-phospho-alpha-D-ribose 1-diphosphate: step 3/9. Functionally, catalyzes the hydrolysis of the adenine ring of phosphoribosyl-AMP. This chain is Phosphoribosyl-AMP cyclohydrolase, found in Brucella canis (strain ATCC 23365 / NCTC 10854 / RM-666).